The primary structure comprises 322 residues: 4-hydroxy-3-methylbut-2-enyl diphosphate reductase 1 (322 aa).

Residue Cys18 participates in [4Fe-4S] cluster binding. The (2E)-4-hydroxy-3-methylbut-2-enyl diphosphate site is built by His47 and His82. The dimethylallyl diphosphate site is built by His47 and His82. Positions 47 and 82 each coordinate isopentenyl diphosphate. Cys104 is a binding site for [4Fe-4S] cluster. His132 serves as a coordination point for (2E)-4-hydroxy-3-methylbut-2-enyl diphosphate. His132 serves as a coordination point for dimethylallyl diphosphate. His132 is an isopentenyl diphosphate binding site. The active-site Proton donor is Glu134. Thr173 serves as a coordination point for (2E)-4-hydroxy-3-methylbut-2-enyl diphosphate. Cys203 contacts [4Fe-4S] cluster. Residues Ser231, Ser232, Asn233, and Ser276 each contribute to the (2E)-4-hydroxy-3-methylbut-2-enyl diphosphate site. Residues Ser231, Ser232, Asn233, and Ser276 each coordinate dimethylallyl diphosphate. Isopentenyl diphosphate is bound by residues Ser231, Ser232, Asn233, and Ser276.

Belongs to the IspH family. Requires [4Fe-4S] cluster as cofactor.

The catalysed reaction is isopentenyl diphosphate + 2 oxidized [2Fe-2S]-[ferredoxin] + H2O = (2E)-4-hydroxy-3-methylbut-2-enyl diphosphate + 2 reduced [2Fe-2S]-[ferredoxin] + 2 H(+). It carries out the reaction dimethylallyl diphosphate + 2 oxidized [2Fe-2S]-[ferredoxin] + H2O = (2E)-4-hydroxy-3-methylbut-2-enyl diphosphate + 2 reduced [2Fe-2S]-[ferredoxin] + 2 H(+). It functions in the pathway isoprenoid biosynthesis; dimethylallyl diphosphate biosynthesis; dimethylallyl diphosphate from (2E)-4-hydroxy-3-methylbutenyl diphosphate: step 1/1. It participates in isoprenoid biosynthesis; isopentenyl diphosphate biosynthesis via DXP pathway; isopentenyl diphosphate from 1-deoxy-D-xylulose 5-phosphate: step 6/6. In terms of biological role, catalyzes the conversion of 1-hydroxy-2-methyl-2-(E)-butenyl 4-diphosphate (HMBPP) into a mixture of isopentenyl diphosphate (IPP) and dimethylallyl diphosphate (DMAPP). Acts in the terminal step of the DOXP/MEP pathway for isoprenoid precursor biosynthesis. The sequence is that of 4-hydroxy-3-methylbut-2-enyl diphosphate reductase 1 from Bradyrhizobium diazoefficiens (strain JCM 10833 / BCRC 13528 / IAM 13628 / NBRC 14792 / USDA 110).